Reading from the N-terminus, the 151-residue chain is Large ribosomal subunit protein uL23m (151 aa).

A compositionally biased stretch (basic and acidic residues) spans 120–143 (DDKKSLEDAKKNHKKFLDKNKDRP). The interval 120 to 151 (DDKKSLEDAKKNHKKFLDKNKDRPGTPGWFSI) is disordered.

This sequence belongs to the universal ribosomal protein uL23 family. Component of the mitochondrial ribosome large subunit (39S) which comprises a 16S rRNA and about 50 distinct proteins.

It localises to the mitochondrion. This Anopheles gambiae (African malaria mosquito) protein is Large ribosomal subunit protein uL23m (mRpL23).